We begin with the raw amino-acid sequence, 790 residues long: cAMP and cAMP-inhibited cGMP 3',5'-cyclic phosphodiesterase 10A (790 aa).

Residues 290-291 (RC), 334-335 (IA), Thr368, Gln387, and His519 contribute to the 3',5'-cyclic AMP site. The PDEase domain maps to 446–763 (TSEEWQGLMR…NQWEKVIRGE (318 aa)). His519 functions as the Proton donor in the catalytic mechanism. His519 contributes to the 3',5'-cyclic GMP binding site. A divalent metal cation-binding residues include His523, His557, Asp558, and Asp668. Position 720 (Gln720) interacts with 3',5'-cyclic AMP. 3',5'-cyclic GMP is bound at residue Gln720. The interval 768–790 (WISGPGPAPSKSTPEKLNVKVED) is disordered. Residues 780-790 (TPEKLNVKVED) are compositionally biased toward basic and acidic residues.

Belongs to the cyclic nucleotide phosphodiesterase family. Homodimer. Requires a divalent metal cation as cofactor. In terms of tissue distribution, detected in striatum (at protein level). Detected in testis and brain.

It is found in the cytoplasm. The protein resides in the cytosol. The enzyme catalyses a nucleoside 3',5'-cyclic phosphate + H2O = a nucleoside 5'-phosphate + H(+). The catalysed reaction is 3',5'-cyclic AMP + H2O = AMP + H(+). It catalyses the reaction 3',5'-cyclic GMP + H2O = GMP + H(+). The protein operates within purine metabolism; 3',5'-cyclic AMP degradation; AMP from 3',5'-cyclic AMP: step 1/1. It functions in the pathway purine metabolism; 3',5'-cyclic GMP degradation; GMP from 3',5'-cyclic GMP: step 1/1. Its function is as follows. Plays a role in signal transduction by regulating the intracellular concentration of cyclic nucleotides. Can hydrolyze both cAMP and cGMP, but has higher affinity for cAMP and is more efficient with cAMP as substrate. May play a critical role in regulating cAMP and cGMP levels in the striatum, a region of the brain that contributes to the control of movement and cognition. The chain is cAMP and cAMP-inhibited cGMP 3',5'-cyclic phosphodiesterase 10A (Pde10a) from Mus musculus (Mouse).